Reading from the N-terminus, the 491-residue chain is Ketol-acid reductoisomerase (NADP(+)) (491 aa).

The 194-residue stretch at 15–208 folds into the KARI N-terminal Rossmann domain; it reads AQLGKCRFMG…GGHRAGVLES (194 aa). Residues 45-48, arginine 68, arginine 76, serine 78, and 108-110 contribute to the NADP(+) site; these read CGAQ and DKQ. Histidine 132 is a catalytic residue. Glycine 158 provides a ligand contact to NADP(+). 2 consecutive KARI C-terminal knotted domains span residues 209–344 and 345–484; these read SFVA…TAPQ and FEGK…MTDM. Mg(2+) is bound by residues aspartate 217, glutamate 221, glutamate 389, and glutamate 393. Serine 414 is a binding site for substrate.

The protein belongs to the ketol-acid reductoisomerase family. The cofactor is Mg(2+).

The enzyme catalyses (2R)-2,3-dihydroxy-3-methylbutanoate + NADP(+) = (2S)-2-acetolactate + NADPH + H(+). It carries out the reaction (2R,3R)-2,3-dihydroxy-3-methylpentanoate + NADP(+) = (S)-2-ethyl-2-hydroxy-3-oxobutanoate + NADPH + H(+). It functions in the pathway amino-acid biosynthesis; L-isoleucine biosynthesis; L-isoleucine from 2-oxobutanoate: step 2/4. The protein operates within amino-acid biosynthesis; L-valine biosynthesis; L-valine from pyruvate: step 2/4. Involved in the biosynthesis of branched-chain amino acids (BCAA). Catalyzes an alkyl-migration followed by a ketol-acid reduction of (S)-2-acetolactate (S2AL) to yield (R)-2,3-dihydroxy-isovalerate. In the isomerase reaction, S2AL is rearranged via a Mg-dependent methyl migration to produce 3-hydroxy-3-methyl-2-ketobutyrate (HMKB). In the reductase reaction, this 2-ketoacid undergoes a metal-dependent reduction by NADPH to yield (R)-2,3-dihydroxy-isovalerate. This chain is Ketol-acid reductoisomerase (NADP(+)), found in Salmonella heidelberg (strain SL476).